We begin with the raw amino-acid sequence, 260 residues long: Transmembrane protein 70, mitochondrial (260 aa).

A mitochondrion-targeting transit peptide spans 1–81 (MLFLALGSPW…PVYWEGYVRF (81 aa)). Topologically, residues 82–102 (LNTPSDKSEDGRLIYTGNMAR) are mitochondrial matrix. Residues 103 to 123 (AVFGVKCFSYSTSLIGLTFLP) traverse the membrane as a helical segment. Topologically, residues 124-141 (YIFTQNNAISESVPLPIQ) are mitochondrial intermembrane. A helical transmembrane segment spans residues 142-162 (IIFYGIMGSFTVITPVLLHFI). The Mitochondrial matrix segment spans residues 163 to 260 (TKGYVIRLYH…SEEKRHKDDK (98 aa)).

Belongs to the TMEM70 family. Homooligomer. Interacts (homooligomer form) with ATP5MC1; this interaction facilitates the oligomer formation of subunit c/ATP5MC1 (c-ring) and the c-ring membrane insertion and also protects ATP5MC1 against intramitochondrial proteolysis. Interacts with the core subunits TMEM126B, NDUFAF1, ECSIT and ACAD9 of the MCIA complex. Interacts with ATP5MC3, TMEM242 and TIMMDC1. Lower expressed in the heart than in the liver (at protein level).

It localises to the mitochondrion inner membrane. In terms of biological role, scaffold protein that participates in the c-ring assembly of mitochondrial ATP synthase (F(1)F(0) ATP synthase or complex V) by facilitating the membrane insertion and oligomer formation of the subunit c/ATP5MC1 through its interaction. Therefore, participates in the early stage of mitochondrial ATP synthase biogenesis and also protects subunit c/ATP5MC1 against intramitochondrial proteolysis. In addition, binds the mitochondrial proton-transporting ATP synthase complexes I and may play a role in the stability of its membrane-bound subassemblies. In Homo sapiens (Human), this protein is Transmembrane protein 70, mitochondrial.